Here is a 267-residue protein sequence, read N- to C-terminus: Undecaprenyl-diphosphatase (267 aa).

The next 7 membrane-spanning stretches (helical) occupy residues 4–24, 41–61, 69–89, 96–116, 173–193, 207–227, and 239–259; these read LYAL…ISST, FWKS…IFVF, LDIW…GLFV, LFNG…FILI, AAEF…AYSI, IPLG…IKFF, and FGIY…SGIL.

The protein belongs to the UppP family.

It is found in the cell inner membrane. The enzyme catalyses di-trans,octa-cis-undecaprenyl diphosphate + H2O = di-trans,octa-cis-undecaprenyl phosphate + phosphate + H(+). Its function is as follows. Catalyzes the dephosphorylation of undecaprenyl diphosphate (UPP). Confers resistance to bacitracin. The sequence is that of Undecaprenyl-diphosphatase from Campylobacter jejuni subsp. jejuni serotype O:2 (strain ATCC 700819 / NCTC 11168).